We begin with the raw amino-acid sequence, 539 residues long: Chaperonin GroEL (539 aa).

Residues 29-32, 86-90, G413, 476-478, and D492 contribute to the ATP site; these read TLGP, DGTTT, and NAA.

It belongs to the chaperonin (HSP60) family. As to quaternary structure, forms a cylinder of 14 subunits composed of two heptameric rings stacked back-to-back. Interacts with the co-chaperonin GroES.

It is found in the cytoplasm. The enzyme catalyses ATP + H2O + a folded polypeptide = ADP + phosphate + an unfolded polypeptide.. Together with its co-chaperonin GroES, plays an essential role in assisting protein folding. The GroEL-GroES system forms a nano-cage that allows encapsulation of the non-native substrate proteins and provides a physical environment optimized to promote and accelerate protein folding. This is Chaperonin GroEL from Streptococcus thermophilus (strain CNRZ 1066).